The sequence spans 218 residues: DNA-directed RNA polymerase III subunit RPC7-like (218 aa).

Residues 130 to 218 (TIILPKRPPK…SDDNMDEAIY (89 aa)) are disordered. Positions 139–160 (KTTEDKEETIQKLETLEKKEEE) are enriched in basic and acidic residues. Acidic residues-rich tracts occupy residues 161–193 (VTSE…EETD) and 201–218 (NGED…EAIY).

It belongs to the eukaryotic RPC7 RNA polymerase subunit family. In terms of assembly, component of the RNA polymerase III (Pol III) complex consisting of 17 subunits. Pol III exists as two alternative complexes defined by the mutually exclusive incorporation of subunit POLR3G/RPC7alpha or POLR3GL/RPC7beta. Found in a trimeric complex with POLR3C/RPC3 and POLR3F/RPC6. Directly interacts with POLR3C.

It is found in the nucleus. Functionally, DNA-dependent RNA polymerase catalyzes the transcription of DNA into RNA using the four ribonucleoside triphosphates as substrates. Specific peripheric component of RNA polymerase III which synthesizes small RNAs, such as 5S rRNA and tRNAs. The protein is DNA-directed RNA polymerase III subunit RPC7-like (POLR3GL) of Bos taurus (Bovine).